We begin with the raw amino-acid sequence, 51 residues long: Large ribosomal subunit protein eL39 (51 aa).

It belongs to the eukaryotic ribosomal protein eL39 family.

This chain is Large ribosomal subunit protein eL39, found in Sulfurisphaera tokodaii (strain DSM 16993 / JCM 10545 / NBRC 100140 / 7) (Sulfolobus tokodaii).